Consider the following 320-residue polypeptide: Protein U25 (320 aa).

It belongs to the herpesviridae US22 family.

This is Protein U25 (U25) from Human herpesvirus 7 (strain JI) (HHV-7).